Reading from the N-terminus, the 341-residue chain is Uroporphyrinogen decarboxylase (341 aa).

Residues Arg23–Arg27, Phe42, Asp73, Tyr148, Ser203, and His318 contribute to the substrate site.

This sequence belongs to the uroporphyrinogen decarboxylase family. Homodimer.

It is found in the cytoplasm. The enzyme catalyses uroporphyrinogen III + 4 H(+) = coproporphyrinogen III + 4 CO2. The protein operates within porphyrin-containing compound metabolism; protoporphyrin-IX biosynthesis; coproporphyrinogen-III from 5-aminolevulinate: step 4/4. Its function is as follows. Catalyzes the decarboxylation of four acetate groups of uroporphyrinogen-III to yield coproporphyrinogen-III. The sequence is that of Uroporphyrinogen decarboxylase from Brucella melitensis biotype 1 (strain ATCC 23456 / CCUG 17765 / NCTC 10094 / 16M).